The sequence spans 194 residues: uncharacterized protein (194 aa).

The protein belongs to the calycin superfamily. Fatty-acid binding protein (FABP) family.

This is an uncharacterized protein from Caenorhabditis elegans.